Reading from the N-terminus, the 772-residue chain is Annulin (772 aa).

Residues C4 and C5 are each lipidated (S-palmitoyl cysteine). The interval N15 to D57 is disordered. Residues L38 to G53 are compositionally biased toward pro residues. Active-site residues include H400 and D427. Ca(2+)-binding residues include N467, D469, E517, and E522.

This sequence belongs to the transglutaminase superfamily. Transglutaminase family. Ca(2+) is required as a cofactor. As to expression, has an annular, or ring-like expression pattern in epithelial annuli of developing limb segment boundary cells. In embryos, it is seen in gastrulating cells, in cells surrounding rapidly dividing neuroblasts, and in muscle pioneer cells invaginating to form apodemes.

It is found in the cell membrane. It catalyses the reaction L-glutaminyl-[protein] + L-lysyl-[protein] = [protein]-L-lysyl-N(6)-5-L-glutamyl-[protein] + NH4(+). Functionally, participates in morphogenetic activities of the cells, maybe by stabilizing the membrane or subcortical structures of cells that are under mechanical stress. Probably catalyzes the cross-linking of proteins and the conjugation of polyamines to proteins. This Schistocerca americana (American grasshopper) protein is Annulin.